The sequence spans 809 residues: Protein PHOX3 (809 aa).

The segment at 1 to 22 (MEKQNEEISTDDAETSQSQLVD) is disordered. 5 TPR repeats span residues 126 to 159 (AQGL…LPKD), 164 to 199 (SHVR…TPDH), 200 to 233 (NKAL…DPKN), 235 to 265 (MASE…PPDY), and 274 to 311 (AALW…EKKN). The tract at residues 288–339 (TKKSNQVEEKSEGEGEDVEPEKKNNVLAEKGKEKIKMKVKGKQSDKRSDTSK) is disordered. Serine 298 bears the Phosphoserine mark. Over residues 307 to 339 (PEKKNNVLAEKGKEKIKMKVKGKQSDKRSDTSK) the composition is skewed to basic and acidic residues. The region spanning 359-438 (NKDVKFVYSD…GTMRFYVVEV (80 aa)) is the PB1 domain. TPR repeat units lie at residues 508–541 (SEAM…SLLN), 563–597 (ESVS…KPEC), and 615–648 (SWYY…IKKS). A disordered region spans residues 656 to 686 (ETGKESEPSQAGKTDCLTHEKDLGSSTQNNP). The TPR 9 repeat unit spans residues 709–741 (SIMEYKLDQPFWRESLEAAMEKFELAGTCKDDV).

Carboxylate clamp type tetratricopeptide repeat protein that may act as a potential Hsp90/Hsp70 co-chaperone. Contributes to polar growth of root hairs. The chain is Protein PHOX3 from Arabidopsis thaliana (Mouse-ear cress).